Here is a 541-residue protein sequence, read N- to C-terminus: Chaperonin GroEL (541 aa).

Residues Thr-29–Pro-32, Asp-86–Thr-90, Gly-413, Asn-476–Ala-478, and Asp-492 contribute to the ATP site.

The protein belongs to the chaperonin (HSP60) family. Forms a cylinder of 14 subunits composed of two heptameric rings stacked back-to-back. Interacts with the co-chaperonin GroES.

The protein resides in the cytoplasm. It catalyses the reaction ATP + H2O + a folded polypeptide = ADP + phosphate + an unfolded polypeptide.. Its function is as follows. Together with its co-chaperonin GroES, plays an essential role in assisting protein folding. The GroEL-GroES system forms a nano-cage that allows encapsulation of the non-native substrate proteins and provides a physical environment optimized to promote and accelerate protein folding. In Streptococcus equi subsp. equi (strain 4047), this protein is Chaperonin GroEL.